The sequence spans 428 residues: Glutamate-1-semialdehyde 2,1-aminomutase (428 aa).

At Lys-267 the chain carries N6-(pyridoxal phosphate)lysine.

Belongs to the class-III pyridoxal-phosphate-dependent aminotransferase family. HemL subfamily. Homodimer. Pyridoxal 5'-phosphate serves as cofactor.

It is found in the cytoplasm. It catalyses the reaction (S)-4-amino-5-oxopentanoate = 5-aminolevulinate. Its pathway is porphyrin-containing compound metabolism; protoporphyrin-IX biosynthesis; 5-aminolevulinate from L-glutamyl-tRNA(Glu): step 2/2. This Desulforapulum autotrophicum (strain ATCC 43914 / DSM 3382 / VKM B-1955 / HRM2) (Desulfobacterium autotrophicum) protein is Glutamate-1-semialdehyde 2,1-aminomutase.